A 334-amino-acid polypeptide reads, in one-letter code: Phosphate acyltransferase (334 aa).

The protein belongs to the PlsX family. In terms of assembly, homodimer. Probably interacts with PlsY.

It localises to the cytoplasm. The catalysed reaction is a fatty acyl-[ACP] + phosphate = an acyl phosphate + holo-[ACP]. It participates in lipid metabolism; phospholipid metabolism. In terms of biological role, catalyzes the reversible formation of acyl-phosphate (acyl-PO(4)) from acyl-[acyl-carrier-protein] (acyl-ACP). This enzyme utilizes acyl-ACP as fatty acyl donor, but not acyl-CoA. The sequence is that of Phosphate acyltransferase from Halothermothrix orenii (strain H 168 / OCM 544 / DSM 9562).